The chain runs to 154 residues: 6,7-dimethyl-8-ribityllumazine synthase (154 aa).

5-amino-6-(D-ribitylamino)uracil contacts are provided by residues tryptophan 22, serine 56 to glutamate 58, and alanine 80 to isoleucine 82. Aspartate 85 to threonine 86 lines the (2S)-2-hydroxy-3-oxobutyl phosphate pocket. The active-site Proton donor is histidine 88. Position 113 (phenylalanine 113) interacts with 5-amino-6-(D-ribitylamino)uracil. Residue arginine 127 participates in (2S)-2-hydroxy-3-oxobutyl phosphate binding.

The protein belongs to the DMRL synthase family.

It catalyses the reaction (2S)-2-hydroxy-3-oxobutyl phosphate + 5-amino-6-(D-ribitylamino)uracil = 6,7-dimethyl-8-(1-D-ribityl)lumazine + phosphate + 2 H2O + H(+). It participates in cofactor biosynthesis; riboflavin biosynthesis; riboflavin from 2-hydroxy-3-oxobutyl phosphate and 5-amino-6-(D-ribitylamino)uracil: step 1/2. In terms of biological role, catalyzes the formation of 6,7-dimethyl-8-ribityllumazine by condensation of 5-amino-6-(D-ribitylamino)uracil with 3,4-dihydroxy-2-butanone 4-phosphate. This is the penultimate step in the biosynthesis of riboflavin. The chain is 6,7-dimethyl-8-ribityllumazine synthase from Deinococcus geothermalis (strain DSM 11300 / CIP 105573 / AG-3a).